We begin with the raw amino-acid sequence, 212 residues long: Peptide methionine sulfoxide reductase MsrA (212 aa).

Residue Cys-52 is part of the active site.

This sequence belongs to the MsrA Met sulfoxide reductase family.

It carries out the reaction L-methionyl-[protein] + [thioredoxin]-disulfide + H2O = L-methionyl-(S)-S-oxide-[protein] + [thioredoxin]-dithiol. The catalysed reaction is [thioredoxin]-disulfide + L-methionine + H2O = L-methionine (S)-S-oxide + [thioredoxin]-dithiol. Its function is as follows. Has an important function as a repair enzyme for proteins that have been inactivated by oxidation. Catalyzes the reversible oxidation-reduction of methionine sulfoxide in proteins to methionine. In Escherichia coli O6:K15:H31 (strain 536 / UPEC), this protein is Peptide methionine sulfoxide reductase MsrA.